An 89-amino-acid chain; its full sequence is Small ribosomal subunit protein uS15 (89 aa).

The protein belongs to the universal ribosomal protein uS15 family. As to quaternary structure, part of the 30S ribosomal subunit. Forms a bridge to the 50S subunit in the 70S ribosome, contacting the 23S rRNA.

Functionally, one of the primary rRNA binding proteins, it binds directly to 16S rRNA where it helps nucleate assembly of the platform of the 30S subunit by binding and bridging several RNA helices of the 16S rRNA. Its function is as follows. Forms an intersubunit bridge (bridge B4) with the 23S rRNA of the 50S subunit in the ribosome. The polypeptide is Small ribosomal subunit protein uS15 (Anaeromyxobacter sp. (strain Fw109-5)).